A 529-amino-acid chain; its full sequence is uncharacterized protein (529 aa).

The first 20 residues, 1–20, serve as a signal peptide directing secretion; sequence MYFLILILVLLLIMVAAATA.

This is an uncharacterized protein from Orgyia pseudotsugata multicapsid polyhedrosis virus (OpMNPV).